The sequence spans 319 residues: Ferrochelatase (319 aa).

Fe cation is bound by residues His194 and Glu275.

The protein belongs to the ferrochelatase family.

It is found in the cytoplasm. It carries out the reaction heme b + 2 H(+) = protoporphyrin IX + Fe(2+). It participates in porphyrin-containing compound metabolism; protoheme biosynthesis; protoheme from protoporphyrin-IX: step 1/1. Functionally, catalyzes the ferrous insertion into protoporphyrin IX. The protein is Ferrochelatase of Vibrio vulnificus (strain YJ016).